The chain runs to 397 residues: DNA-directed RNA polymerase subunit Rpo1C (397 aa).

The protein belongs to the RNA polymerase beta' chain family. In terms of assembly, part of the RNA polymerase complex. An artificial construct of the RNAP clamp domain (including part of this protein) contacts transcription elongation factors Spt4 and Spt5.

It is found in the cytoplasm. It catalyses the reaction RNA(n) + a ribonucleoside 5'-triphosphate = RNA(n+1) + diphosphate. Its function is as follows. DNA-dependent RNA polymerase (RNAP) catalyzes the transcription of DNA into RNA using the four ribonucleoside triphosphates as substrates. Forms part of the jaw domain. This Pyrococcus furiosus (strain ATCC 43587 / DSM 3638 / JCM 8422 / Vc1) protein is DNA-directed RNA polymerase subunit Rpo1C.